Consider the following 527-residue polypeptide: V-set and immunoglobulin domain-containing protein 10 (527 aa).

A signal peptide spans 1–13 (MWTRRWIQFLVLC). Ig-like C2-type domains follow at residues 14-111 (LHLW…LKVS), 123-212 (PTRT…RQLL), 216-306 (PPIT…CQIQ), and 310-399 (PLLE…KEIN). Topologically, residues 23-409 (YLGVFRGDVN…VWLTVNKPHN (387 aa)) are extracellular. Residues Asn-32, Asn-41, Asn-52, Asn-64, Asn-74, Asn-90, Asn-129, Asn-139, Asn-191, Asn-206, Asn-226, Asn-260, Asn-276, Asn-325, Asn-346, and Asn-375 are each glycosylated (N-linked (GlcNAc...) asparagine). Cys-144 and Cys-194 are joined by a disulfide. Cys-238 and Cys-288 form a disulfide bridge. Cys-330 and Cys-387 form a disulfide bridge. The helical transmembrane segment at 410–430 (IVGLVTALLLLFLLVVAIITG) threads the bilayer. Topologically, residues 431-527 (TVLYCDPQIY…TGEENQNEEI (97 aa)) are cytoplasmic. Positions 501 to 527 (RPPESTSSDLFSEVSDDTGEENQNEEI) are disordered. Acidic residues predominate over residues 514–527 (VSDDTGEENQNEEI).

The protein localises to the membrane. In Xenopus laevis (African clawed frog), this protein is V-set and immunoglobulin domain-containing protein 10 (vsig10).